We begin with the raw amino-acid sequence, 37 residues long: Large ribosomal subunit protein bL36c (37 aa).

Belongs to the bacterial ribosomal protein bL36 family.

Its subcellular location is the plastid. The polypeptide is Large ribosomal subunit protein bL36c (rpl36) (Euglena longa (Euglenophycean alga)).